Here is a 604-residue protein sequence, read N- to C-terminus: Elongation factor 4 (604 aa).

The 183-residue stretch at 7-189 folds into the tr-type G domain; sequence SRIRNFSIIA…SIVHLVPPPD (183 aa). GTP contacts are provided by residues 19-24 and 136-139; these read DHGKST and NKID.

This sequence belongs to the TRAFAC class translation factor GTPase superfamily. Classic translation factor GTPase family. LepA subfamily.

Its subcellular location is the cell inner membrane. The enzyme catalyses GTP + H2O = GDP + phosphate + H(+). Required for accurate and efficient protein synthesis under certain stress conditions. May act as a fidelity factor of the translation reaction, by catalyzing a one-codon backward translocation of tRNAs on improperly translocated ribosomes. Back-translocation proceeds from a post-translocation (POST) complex to a pre-translocation (PRE) complex, thus giving elongation factor G a second chance to translocate the tRNAs correctly. Binds to ribosomes in a GTP-dependent manner. The polypeptide is Elongation factor 4 (Gloeothece citriformis (strain PCC 7424) (Cyanothece sp. (strain PCC 7424))).